An 832-amino-acid chain; its full sequence is Mucosa-associated lymphoid tissue lymphoma translocation protein 1 homolog (832 aa).

Residues 1–39 (MSLWGQPLQASPPLAVRQPPTASSGPSTSPPAGATLNRL) form a disordered region. N-acetylserine is present on S2. The span at 19-39 (PPTASSGPSTSPPAGATLNRL) shows a compositional bias: low complexity. Residues 45-132 (RRLSESLDRA…EVLPLLNPPG (88 aa)) enclose the Death domain. 2 Ig-like C2-type domains span residues 131–207 (PGLK…FEFS) and 218–314 (AEVT…KKAE). S141 carries the post-translational modification Phosphoserine. 2 cysteine pairs are disulfide-bonded: C154/C196 and C257/C299. The interval 356-570 (IGNMSYWEHP…SLSEKRALTD (215 aa)) is caspase-like. The Nuclear export signal signature appears at 377-384 (LTNLLRQL). Residues H423 and C472 contribute to the active site.

This sequence belongs to the peptidase C14B family. As to quaternary structure, homooligomer; forms oligomers which bind to TRAF6. Forms a complex with CARD14 and MALT1; resulting in the formation of a CBM (CARD14-BCL10-MALT1) complex. Forms a complex with CARD11 and MALT1; resulting in the formation of a CBM (CARD11-BCL10-MALT1) complex. Forms a complex with CARD9 and MALT1; resulting in the formation of a CBM (CARD9-BCL10-MALT1) complex.

It is found in the cytoplasm. The protein resides in the perinuclear region. The protein localises to the nucleus. Protease that enhances BCL10-induced activation: acts via formation of CBM complexes that channel adaptive and innate immune signaling downstream of CARD domain-containing proteins (CARD9, CARD11 and CARD14) to activate NF-kappa-B and MAP kinase p38 pathways which stimulate expression of genes encoding pro-inflammatory cytokines and chemokines. Mediates BCL10 cleavage: MALT1-dependent BCL10 cleavage plays an important role in T-cell antigen receptor-induced integrin adhesion. Involved in the induction of T helper 17 cells (Th17) differentiation. Cleaves RC3H1 and ZC3H12A in response to T-cell receptor (TCR) stimulation which releases their cooperatively repressed targets to promote Th17 cell differentiation. Also mediates cleavage of N4BP1 in T-cells following TCR-mediated activation, leading to N4BP1 inactivation. May also have ubiquitin ligase activity: binds to TRAF6, inducing TRAF6 oligomerization and activation of its ligase activity. The chain is Mucosa-associated lymphoid tissue lymphoma translocation protein 1 homolog from Mus musculus (Mouse).